The primary structure comprises 444 residues: Shufflon protein B' (444 aa).

The interval Met-1 to Gly-361 is constant region. The tract at residues Thr-362–Gln-444 is variable region.

This Escherichia coli protein is Shufflon protein B'.